The primary structure comprises 222 residues: Protein ORM1 (222 aa).

A disordered region spans residues 1–57 (MTELDYQGTAEAASTSYSRNQTDLKPFPSAGSASSSIKTTEPVKDHRRRRSSSIISH). Residues 1 to 85 (MTELDYQGTA…NATWVDQRGA (85 aa)) lie on the Cytoplasmic side of the membrane. Polar residues predominate over residues 12 to 23 (AASTSYSRNQTD). A phosphoserine mark is found at serine 29, serine 32, and serine 56. The chain crosses the membrane as a helical span at residues 86-106 (WIIHVVIIILLKLFYNLFPGV). Residues 107–109 (TTE) lie on the Extracellular side of the membrane. A helical membrane pass occupies residues 110 to 130 (WSWTLTNMTYVIGSYVMFHLI). Residues 131 to 162 (KGTPFDFNGGAYDNLTMWEQIDDETLYTPSRK) lie on the Cytoplasmic side of the membrane. The helical transmembrane segment at 163 to 183 (FLISVPIALFLVSTHYAHYDL) threads the bilayer. Position 184 (lysine 184) is a topological domain, extracellular. A helical transmembrane segment spans residues 185–205 (LFSWNCFLTTFGAVVPKLPVT). Residues 206–222 (HRLRISIPGITGRAQIS) lie on the Cytoplasmic side of the membrane.

Belongs to the ORM family. As to quaternary structure, component of the SPOTS complex, at least composed of LCB1/2 (LCB1 and/or LCB2), ORM1/2 (ORM1 and/or ORM2), SAC1 and TSC3. Post-translationally, phosphorylated in case of disruption of sphingolipid synthesis. Phosphorylation regulates inhibitory activity of serine palmitoyltransferases (LCB1 and LCB2).

The protein localises to the endoplasmic reticulum membrane. Its function is as follows. Component of the SPOTS complex that acts as a negative regulator of sphingolipid synthesis. Acts by inhibiting serine palmitoyltransferases (LCB1 and LCB2) activity. Along with ORM2, plays a role in the phosphorylation of LAC1 and YPK1, the distribution of actin patches between mother and daughter cells, and in endocytosis. Disruption or inhibition of sphingolipid synthesis leads to the activation and phosphorylation of YPK1 through the TORC2 and PKH1 pathways, which in turn phosphorylates ORM1 and LAG1 to activate sphingolipid synthesis. The chain is Protein ORM1 (ORM1) from Saccharomyces cerevisiae (strain ATCC 204508 / S288c) (Baker's yeast).